The sequence spans 2596 residues: Cadherin EGF LAG seven-pass G-type receptor fmi-1 (2596 aa).

The signal sequence occupies residues 1–22; it reads MMLDRIMFLLFFILSLVIGSFS. Residues 23–2229 lie on the Extracellular side of the membrane; sequence EYLDDKYYST…IVRVAQMDNM (2207 aa). 8 Cadherin domains span residues 166-270, 271-375, 376-479, 480-581, 582-682, 683-784, 785-892, and 893-1000; these read QQEK…SPIF, EKDS…APVF, ASDS…APTL, IAAQ…APTF, DKKE…APYF, NDHP…SPQF, TSSS…APTF, and EQLS…KPAL. 6 N-linked (GlcNAc...) asparagine glycosylation sites follow: Asn381, Asn387, Asn562, Asn587, Asn765, and Asn824. N-linked (GlcNAc...) asparagine glycans are attached at residues Asn1030 and Asn1263. The EGF-like 1 domain maps to 1251-1287; that stretch reads RIDECYRGRCSNNSTCVAFENTYQCECKPGWIGRHCE. 12 cysteine pairs are disulfide-bonded: Cys1255-Cys1266, Cys1260-Cys1275, Cys1277-Cys1286, Cys1497-Cys1526, Cys1533-Cys1546, Cys1540-Cys1555, Cys1557-Cys1567, Cys1709-Cys1732, Cys1738-Cys1750, Cys1744-Cys1759, Cys1761-Cys1770, and Cys1780-Cys1785. The 194-residue stretch at 1333–1526 folds into the Laminin G-like 1 domain; sequence SVSFDGEGLL…HKVGQVHEGC (194 aa). Positions 1529–1568 constitute an EGF-like 2 domain; that stretch reads RKDFCSTSDGQCSATSKCVNRWGGRICSCPQSVHSTGECV. The Laminin G-like 2 domain occupies 1577-1732; it reads RGHSLFEEES…KKKGKTRAGC (156 aa). 2 EGF-like domains span residues 1734–1771 and 1776–1808; these read VPNR…DTCL and VANV…KNCQ. N-linked (GlcNAc...) asparagine glycosylation occurs at Asn1789. Cysteines 1798 and 1807 form a disulfide. Asn1965, Asn1992, Asn2152, Asn2195, and Asn2228 each carry an N-linked (GlcNAc...) asparagine glycan. Residues 2054-2219 form the GAIN-B domain; that stretch reads EYSTLISKLW…TMFVNDQSSS (166 aa). The cysteines at positions 2174 and 2201 are disulfide-linked. The interval 2174–2219 is GPS; sequence CVRFDEKSGTWTARGAALIGLNLTHAACEYNRIGVFTMFVNDQSSS. A helical membrane pass occupies residues 2230–2250; the sequence is TSPAIAGVALFLCFLSILLTL. At 2251–2261 the chain is on the cytoplasmic side; it reads SRRSLKTHSVR. The chain crosses the membrane as a helical span at residues 2262–2282; it reads IGFILFFAINILNLFFVHKTA. Over 2283–2292 the chain is Extracellular; that stretch reads INQAYCPVRN. Residues 2293–2313 form a helical membrane-spanning segment; sequence AMLSFTSSAPFAWLFLYGLYI. The Cytoplasmic portion of the chain corresponds to 2314–2326; sequence YRMLADGSSSPSL. Residues 2327-2347 form a helical membrane-spanning segment; that stretch reads TTSLLVGIVFPCLISFTTFFV. Residues 2348 to 2356 are Extracellular-facing; it reads TDQCSLSPH. Residues 2357-2377 form a helical membrane-spanning segment; that stretch reads LWLFWCIILPIGLFLLLSFYA. Topologically, residues 2378-2401 are cytoplasmic; it reads AATSVLVSLHKKYDVFVAKYNVKR. A helical transmembrane segment spans residues 2402 to 2422; it reads AVFQHFILTIFTLGMTLTGLF. The Extracellular segment spans residues 2423-2437; it reads ANQLPLPMEIMEISQ. The helical transmembrane segment at 2438-2458 threads the bilayer; it reads SIIYLIAALVIFLWCVCDITT. The Cytoplasmic portion of the chain corresponds to 2459–2596; sequence KASDSNPSMW…KNTTSTFNRE (138 aa).

It belongs to the G-protein coupled receptor 2 family. LN-TM7 subfamily. Expressed in a region of neuropil around the nerve ring and the ventral cord (at protein level). Expressed in the head, tail, ventral cord, nerve ring and neurons including HSN neurons. Expressed in DA, VA, and VB and weakly in the DB cholinergic neurons. Not expressed in ventral D-type GABAergic motorneurons.

It is found in the cell membrane. It localises to the cell projection. Its subcellular location is the axon. The protein resides in the dendrite. In terms of biological role, during ventral cord development, required for axon fasciculation and navigation, mediating both pioneer and follower axon extension, guidance and track formation. Acts in CEPsh glia and SubL neurons to guide follower axons into the nerve ring. Promotes motorneuron development by positively regulating the extension of the anterior neurite of ventral D-type GABAergic motorneurons along the anterior-posterior axis of the ventral nerve cord. Plays a role in synaptogenesis by regulating synaptic vesicle accumulation at GABAergic and cholinergic neuromuscular junctions. In Caenorhabditis elegans, this protein is Cadherin EGF LAG seven-pass G-type receptor fmi-1.